The following is a 500-amino-acid chain: Abscisic acid 8'-hydroxylase 3 (500 aa).

Residues 3-23 (ASFVIVIVISFFISLAFMCYV) traverse the membrane as a helical segment. C426 contacts heme.

The protein belongs to the cytochrome P450 family. Heme is required as a cofactor.

It is found in the membrane. It carries out the reaction 2-cis-(+)-abscisate + reduced [NADPH--hemoprotein reductase] + O2 = (+)-8'-hydroxyabscisate + oxidized [NADPH--hemoprotein reductase] + H2O + H(+). The protein operates within plant hormone degradation; abscisic acid degradation. Functionally, involved in the oxidative degradation of abscisic acid. The chain is Abscisic acid 8'-hydroxylase 3 (CYP707A7) from Oryza sativa subsp. japonica (Rice).